The following is a 464-amino-acid chain: ATP synthase subunit beta (464 aa).

153-160 (GGAGVGKT) lines the ATP pocket.

Belongs to the ATPase alpha/beta chains family. F-type ATPases have 2 components, CF(1) - the catalytic core - and CF(0) - the membrane proton channel. CF(1) has five subunits: alpha(3), beta(3), gamma(1), delta(1), epsilon(1). CF(0) has three main subunits: a(1), b(2) and c(9-12). The alpha and beta chains form an alternating ring which encloses part of the gamma chain. CF(1) is attached to CF(0) by a central stalk formed by the gamma and epsilon chains, while a peripheral stalk is formed by the delta and b chains.

The protein localises to the cell inner membrane. It catalyses the reaction ATP + H2O + 4 H(+)(in) = ADP + phosphate + 5 H(+)(out). Its function is as follows. Produces ATP from ADP in the presence of a proton gradient across the membrane. The catalytic sites are hosted primarily by the beta subunits. The chain is ATP synthase subunit beta from Burkholderia vietnamiensis (strain G4 / LMG 22486) (Burkholderia cepacia (strain R1808)).